The chain runs to 1487 residues: Protein cft1 (1487 aa).

The span at 486–504 shows a compositional bias: acidic residues; it reads DLDLDDEDLEDDDDDDLYG. The tract at residues 486–513 is disordered; it reads DLDLDDEDLEDDDDDDLYGEESASPEQA.

This sequence belongs to the CFT1 family.

The protein localises to the nucleus. RNA-binding component of the cleavage and polyadenylation factor (CPF) complex, which plays a key role in polyadenylation-dependent pre-mRNA 3'-end formation and cooperates with cleavage factors including the CFIA complex and hrp1/CFIB. Involved in poly(A) site recognition. May be involved in coupling transcription termination and mRNA 3'-end formation. The sequence is that of Protein cft1 (paa-3) from Neurospora crassa (strain ATCC 24698 / 74-OR23-1A / CBS 708.71 / DSM 1257 / FGSC 987).